Consider the following 432-residue polypeptide: UDP-N-acetylmuramate--L-alanine ligase (432 aa).

108 to 114 (GAHGKTS) contributes to the ATP binding site.

The protein belongs to the MurCDEF family.

Its subcellular location is the cytoplasm. It carries out the reaction UDP-N-acetyl-alpha-D-muramate + L-alanine + ATP = UDP-N-acetyl-alpha-D-muramoyl-L-alanine + ADP + phosphate + H(+). It participates in cell wall biogenesis; peptidoglycan biosynthesis. In terms of biological role, cell wall formation. In Bacillus licheniformis (strain ATCC 14580 / DSM 13 / JCM 2505 / CCUG 7422 / NBRC 12200 / NCIMB 9375 / NCTC 10341 / NRRL NRS-1264 / Gibson 46), this protein is UDP-N-acetylmuramate--L-alanine ligase.